The primary structure comprises 336 residues: MKTKTNKPLIVMAVTFLLIVVVFFISLNLGVIKIAPLKTLQVFFGQGTARDELVLFEFRLPRIILSLLVGAGISVAGAILQSVSQNELAEPGILGINAGGSLAVVLFIYFFQGSASDLSFFGTFMLPFSALAGAILAAFLIYILAWKKGVTPIRLILVGIGVNAGFNALLLIFQLKMDPHDFMQAAVWISGSIWGANWNMIWAILPWIVILLLFTLYKARYLNIMQLGDQLATGLGTAVEKERRILLLAAVTLAASCVAAAGGIAFLGLIAPHVARRLTGPRHQTLIPVSAFIGSFLFLLADTLARNVLAPSEIPVGLVISVLGAPYFIYLLMKAN.

9 helical membrane passes run 9–29, 63–83, 91–111, 124–144, 155–175, 193–213, 245–265, 285–305, and 313–333; these read LIVM…SLNL, IILS…LQSV, PGIL…IYFF, FMLP…IYIL, LILV…IFQL, IWGA…ILLL, ILLL…GGIA, TLIP…DTLA, and EIPV…YLLM.

The protein belongs to the binding-protein-dependent transport system permease family. FecCD subfamily. As to quaternary structure, the complex is composed of an ATP-binding protein (FhuC), two transmembrane proteins (FhuB and FhuG) and a solute-binding protein (FhuD or YxeB).

The protein resides in the cell membrane. Part of the ABC transporter complex FhuBGCD involved in iron(3+)-hydroxamate import. Responsible for the translocation of the substrate across the membrane. In Bacillus subtilis (strain 168), this protein is Iron(3+)-hydroxamate import system permease protein FhuG (fhuG).